A 398-amino-acid chain; its full sequence is tRNA-specific 2-thiouridylase MnmA (398 aa).

ATP is bound by residues alanine 18–serine 25 and leucine 44. The active-site Nucleophile is cysteine 112. Cysteine 112 and cysteine 213 are joined by a disulfide. Glycine 136 is an ATP binding site. The segment at arginine 163–glutamine 165 is interaction with tRNA. Cysteine 213 functions as the Cysteine persulfide intermediate in the catalytic mechanism.

Belongs to the MnmA/TRMU family.

It is found in the cytoplasm. The enzyme catalyses S-sulfanyl-L-cysteinyl-[protein] + uridine(34) in tRNA + AH2 + ATP = 2-thiouridine(34) in tRNA + L-cysteinyl-[protein] + A + AMP + diphosphate + H(+). Catalyzes the 2-thiolation of uridine at the wobble position (U34) of tRNA, leading to the formation of s(2)U34. This Agrobacterium fabrum (strain C58 / ATCC 33970) (Agrobacterium tumefaciens (strain C58)) protein is tRNA-specific 2-thiouridylase MnmA.